We begin with the raw amino-acid sequence, 454 residues long: tRNA modification GTPase MnmE (454 aa).

Positions 23, 80, and 120 each coordinate (6S)-5-formyl-5,6,7,8-tetrahydrofolate. The 162-residue stretch at 216–377 folds into the TrmE-type G domain; the sequence is GMKVVIAGRP…LRNHLKQSMG (162 aa). Residue Asn-226 participates in K(+) binding. Residues 226-231, 245-251, 270-273, 335-338, and 358-360 each bind GTP; these read NAGKSS, TDIAGTT, DTAG, NKAD, and SAR. Ser-230 contributes to the Mg(2+) binding site. Residues Thr-245, Ile-247, and Thr-250 each contribute to the K(+) site. Thr-251 contributes to the Mg(2+) binding site. Lys-454 provides a ligand contact to (6S)-5-formyl-5,6,7,8-tetrahydrofolate.

Belongs to the TRAFAC class TrmE-Era-EngA-EngB-Septin-like GTPase superfamily. TrmE GTPase family. In terms of assembly, homodimer. Heterotetramer of two MnmE and two MnmG subunits. The cofactor is K(+).

Its subcellular location is the cytoplasm. Functionally, exhibits a very high intrinsic GTPase hydrolysis rate. Involved in the addition of a carboxymethylaminomethyl (cmnm) group at the wobble position (U34) of certain tRNAs, forming tRNA-cmnm(5)s(2)U34. The protein is tRNA modification GTPase MnmE of Klebsiella pneumoniae subsp. pneumoniae (strain ATCC 700721 / MGH 78578).